The primary structure comprises 403 residues: Heparan-sulfate 6-O-sulfotransferase 2 (403 aa).

Residues 1–7 (MEDRSHK) are Cytoplasmic-facing. The chain crosses the membrane as a helical; Signal-anchor for type II membrane protein span at residues 8-28 (VLLALVMLFLFAVIVLQYVCP). Residues 29 to 403 (GTECQLLRLR…DYLGNVERWR (375 aa)) lie on the Lumenal side of the membrane. The N-linked (GlcNAc...) asparagine glycan is linked to asparagine 64. 88-96 (HIQKTGGTT) contacts 3'-phosphoadenylyl sulfate. Substrate contacts are provided by residues 118–119 (KK), arginine 135, tryptophan 140, and histidine 145. Histidine 145 acts as the Proton acceptor in catalysis. Residues arginine 180 and serine 188 each contribute to the 3'-phosphoadenylyl sulfate site. Substrate-binding residues include histidine 192 and tryptophan 199. Asparagine 259 is a glycosylation site (N-linked (GlcNAc...) asparagine). A 3'-phosphoadenylyl sulfate-binding site is contributed by 312-314 (TQY). The N-linked (GlcNAc...) asparagine glycan is linked to asparagine 315. 318–319 (RA) contributes to the 3'-phosphoadenylyl sulfate binding site. The interval 381–403 (AHLREQGENSSSTDYLGNVERWR) is disordered. A glycan (N-linked (GlcNAc...) asparagine) is linked at asparagine 389.

It belongs to the sulfotransferase 6 family.

The protein resides in the membrane. It carries out the reaction alpha-D-glucosaminyl-[heparan sulfate](n) + 3'-phosphoadenylyl sulfate = 6-sulfo-alpha-D-glucosaminyl-[heparan sulfate](n) + adenosine 3',5'-bisphosphate + H(+). 6-O-sulfation enzyme which catalyzes the transfer of sulfate from 3'-phosphoadenosine 5'-phosphosulfate (PAPS) to position 6 of the N-sulfoglucosamine residue (GlcNS) of heparan sulfate. May also play a role in limb development. This Gallus gallus (Chicken) protein is Heparan-sulfate 6-O-sulfotransferase 2 (HS6ST2).